The sequence spans 494 residues: NADH-quinone oxidoreductase subunit N (494 aa).

The next 14 helical transmembrane spans lie at Leu13–Ile33, Phe43–Val63, Met82–Gly102, Leu117–Gly137, Leu138–Phe158, Tyr169–Ala189, Leu209–Val229, Pro243–Leu263, Leu277–Leu297, Ile311–Ala331, Ile332–Leu352, Ala380–Gly400, Gln412–Leu432, and Ile461–Leu481.

This sequence belongs to the complex I subunit 2 family. In terms of assembly, NDH-1 is composed of 13 different subunits. Subunits NuoA, H, J, K, L, M, N constitute the membrane sector of the complex.

It is found in the cell inner membrane. It catalyses the reaction a quinone + NADH + 5 H(+)(in) = a quinol + NAD(+) + 4 H(+)(out). Functionally, NDH-1 shuttles electrons from NADH, via FMN and iron-sulfur (Fe-S) centers, to quinones in the respiratory chain. The immediate electron acceptor for the enzyme in this species is believed to be ubiquinone. Couples the redox reaction to proton translocation (for every two electrons transferred, four hydrogen ions are translocated across the cytoplasmic membrane), and thus conserves the redox energy in a proton gradient. This is NADH-quinone oxidoreductase subunit N from Ectopseudomonas mendocina (strain ymp) (Pseudomonas mendocina).